A 148-amino-acid polypeptide reads, in one-letter code: Large ribosomal subunit protein bL9 (148 aa).

It belongs to the bacterial ribosomal protein bL9 family.

Functionally, binds to the 23S rRNA. The protein is Large ribosomal subunit protein bL9 of Pseudomonas putida (strain GB-1).